Consider the following 570-residue polypeptide: PTS system lactose-specific EIICB component (570 aa).

The 402-residue stretch at 9–410 (IEKGKPFFEK…VVDIIIYYPF (402 aa)) folds into the PTS EIIC type-3 domain. Helical transmembrane passes span 31 to 51 (GFIS…IAYV), 65 to 85 (AILM…VAGT), 104 to 124 (INFI…ASDP), 133 to 153 (AFMG…TVIV), 178 to 198 (FKDL…DLVI), 223 to 243 (GWIG…VGIH), 283 to 303 (MFIV…MFMW), 340 to 360 (VFFI…KLFV), and 382 to 402 (IIMG…LIVV). The 104-residue stretch at 467 to 570 (QTNVLVLCAG…LDFVQQQFEN (104 aa)) folds into the PTS EIIB type-3 domain. Cysteine 474 acts as the Phosphocysteine intermediate; for EIIB activity in catalysis. Residue cysteine 474 is modified to Phosphocysteine; by EIIA.

The protein resides in the cell membrane. It catalyses the reaction lactose(out) + N(pros)-phospho-L-histidyl-[protein] = lactose 6-phosphate(in) + L-histidyl-[protein]. Functionally, the phosphoenolpyruvate-dependent sugar phosphotransferase system (sugar PTS), a major carbohydrate active transport system, catalyzes the phosphorylation of incoming sugar substrates concomitantly with their translocation across the cell membrane. The enzyme II LacEF PTS system is involved in lactose transport. The polypeptide is PTS system lactose-specific EIICB component (Staphylococcus aureus (strain MSSA476)).